A 147-amino-acid chain; its full sequence is Large ribosomal subunit protein uL15 (147 aa).

The interval 1–65 (MQLHELKPAP…PLQRRLPKRG (65 aa)) is disordered. 2 stretches are compositionally biased toward gly residues: residues 21–31 (QGIGSGLGKTA) and 42–52 (SGGGVRPGFEG).

Belongs to the universal ribosomal protein uL15 family. Part of the 50S ribosomal subunit.

Functionally, binds to the 23S rRNA. This is Large ribosomal subunit protein uL15 from Heliobacterium modesticaldum (strain ATCC 51547 / Ice1).